Here is a 561-residue protein sequence, read N- to C-terminus: Putative pectinesterase/pectinesterase inhibitor 24 (561 aa).

A helical membrane pass occupies residues 26–46 (IAIIAVSLVILAGIVIGAVFG). Residues 64–211 (DSISVSVKAV…TELTSNALAI (148 aa)) form a pectinesterase inhibitor 24 region. N-linked (GlcNAc...) asparagine glycans are attached at residues Asn-92, Asn-130, Asn-148, and Asn-200. The interval 255 to 548 (DIVVAKDGSG…TVKPFIDGGR (294 aa)) is pectinesterase 24. Positions 330 and 360 each coordinate substrate. Catalysis depends on Asp-383, which acts as the Proton donor; for pectinesterase activity. Cys-397 and Cys-417 are disulfide-bonded. The Nucleophile; for pectinesterase activity role is filled by Asp-404. Substrate is bound by residues Arg-468 and Trp-470. N-linked (GlcNAc...) asparagine glycosylation occurs at Asn-472.

In the N-terminal section; belongs to the PMEI family. This sequence in the C-terminal section; belongs to the pectinesterase family.

Its subcellular location is the membrane. It catalyses the reaction [(1-&gt;4)-alpha-D-galacturonosyl methyl ester](n) + n H2O = [(1-&gt;4)-alpha-D-galacturonosyl](n) + n methanol + n H(+). The protein operates within glycan metabolism; pectin degradation; 2-dehydro-3-deoxy-D-gluconate from pectin: step 1/5. Acts in the modification of cell walls via demethylesterification of cell wall pectin. This Arabidopsis thaliana (Mouse-ear cress) protein is Putative pectinesterase/pectinesterase inhibitor 24 (PME24).